A 120-amino-acid polypeptide reads, in one-letter code: Glycine cleavage system H protein (120 aa).

In terms of domain architecture, Lipoyl-binding spans 17–99; that stretch reads VATVGITNYA…QGAGWFFKLK (83 aa). Lysine 58 carries the N6-lipoyllysine modification.

It belongs to the GcvH family. As to quaternary structure, the glycine cleavage system is composed of four proteins: P, T, L and H. (R)-lipoate is required as a cofactor.

Functionally, the glycine cleavage system catalyzes the degradation of glycine. The H protein shuttles the methylamine group of glycine from the P protein to the T protein. The polypeptide is Glycine cleavage system H protein (Rhizobium etli (strain ATCC 51251 / DSM 11541 / JCM 21823 / NBRC 15573 / CFN 42)).